Reading from the N-terminus, the 135-residue chain is Large ribosomal subunit protein eL27y (135 aa).

Belongs to the eukaryotic ribosomal protein eL27 family.

This is Large ribosomal subunit protein eL27y (RPL27B) from Arabidopsis thaliana (Mouse-ear cress).